The primary structure comprises 64 residues: Large ribosomal subunit protein bL35 (64 aa).

The protein belongs to the bacterial ribosomal protein bL35 family.

In Shewanella oneidensis (strain ATCC 700550 / JCM 31522 / CIP 106686 / LMG 19005 / NCIMB 14063 / MR-1), this protein is Large ribosomal subunit protein bL35.